The following is a 327-amino-acid chain: Taste receptor type 2 member 102 (327 aa).

The Extracellular portion of the chain corresponds to 1–7 (MEPVIYS). Residues 8 to 28 (FATLLIHVEFIFGNLSNGFIV) traverse the membrane as a helical segment. Over 29–46 (LSNFWDWVIKRKLSTIDK) the chain is Cytoplasmic. A helical membrane pass occupies residues 47–67 (ILLTLAISRITLIWEIYTWFT). The Extracellular portion of the chain corresponds to 68–87 (SVYGPSSFAIGMKLQILYFT). Residues 88–108 (WILSSHFSLWFATALSIFYLL) traverse the membrane as a helical segment. At 109–124 (RIANCSWKIFLYLKWR) the chain is on the cytoplasmic side. The chain crosses the membrane as a helical span at residues 125-145 (LKQVIVGMLLASLVFLPGILT). Over 146–179 (QRTLEERPYRYGGNTSEDSMETDFARFTELILFN) the chain is Extracellular. 2 N-linked (GlcNAc...) asparagine glycosylation sites follow: N159 and N179. The chain crosses the membrane as a helical span at residues 180-200 (LTIFSVIPFSLASISFLLLIF). Topologically, residues 201–229 (SLWKHLRKMQLSSRGHGDPSTKAHTNALR) are cytoplasmic. Residues 230–250 (IMVSFLLLYSIYFLSLLLSWI) traverse the membrane as a helical segment. Over 251-260 (AQKHHSKLVD) the chain is Extracellular. The helical transmembrane segment at 261–281 (IIGIITGLMYPSAHSFILILG) threads the bilayer. Topologically, residues 282 to 327 (NSKLMQTSLWILSHLRCRLKGENILNPSGNQVTSCYIFCIANKSVS) are cytoplasmic.

Belongs to the G-protein coupled receptor T2R family.

The protein localises to the membrane. Functionally, putative taste receptor which may play a role in the perception of bitterness. This is Taste receptor type 2 member 102 from Rattus norvegicus (Rat).